The sequence spans 457 residues: Siroheme synthase (457 aa).

The segment at 1-204 (MDHLPIFCQL…NDQKAITETT (204 aa)) is precorrin-2 dehydrogenase /sirohydrochlorin ferrochelatase. NAD(+) contacts are provided by residues 22–23 (DV) and 43–44 (LA). The residue at position 128 (Ser128) is a Phosphoserine. A uroporphyrinogen-III C-methyltransferase region spans residues 216–457 (GEVVLVGAGP…RDKLNWFSNH (242 aa)). Pro225 serves as a coordination point for S-adenosyl-L-methionine. Asp248 (proton acceptor) is an active-site residue. Lys270 (proton donor) is an active-site residue. S-adenosyl-L-methionine is bound by residues 301–303 (GGD), Ile306, 331–332 (TA), Met382, and Gly411.

The protein in the N-terminal section; belongs to the precorrin-2 dehydrogenase / sirohydrochlorin ferrochelatase family. This sequence in the C-terminal section; belongs to the precorrin methyltransferase family.

It catalyses the reaction uroporphyrinogen III + 2 S-adenosyl-L-methionine = precorrin-2 + 2 S-adenosyl-L-homocysteine + H(+). The catalysed reaction is precorrin-2 + NAD(+) = sirohydrochlorin + NADH + 2 H(+). It carries out the reaction siroheme + 2 H(+) = sirohydrochlorin + Fe(2+). It functions in the pathway cofactor biosynthesis; adenosylcobalamin biosynthesis; precorrin-2 from uroporphyrinogen III: step 1/1. It participates in cofactor biosynthesis; adenosylcobalamin biosynthesis; sirohydrochlorin from precorrin-2: step 1/1. The protein operates within porphyrin-containing compound metabolism; siroheme biosynthesis; precorrin-2 from uroporphyrinogen III: step 1/1. Its pathway is porphyrin-containing compound metabolism; siroheme biosynthesis; siroheme from sirohydrochlorin: step 1/1. It functions in the pathway porphyrin-containing compound metabolism; siroheme biosynthesis; sirohydrochlorin from precorrin-2: step 1/1. Functionally, multifunctional enzyme that catalyzes the SAM-dependent methylations of uroporphyrinogen III at position C-2 and C-7 to form precorrin-2 via precorrin-1. Then it catalyzes the NAD-dependent ring dehydrogenation of precorrin-2 to yield sirohydrochlorin. Finally, it catalyzes the ferrochelation of sirohydrochlorin to yield siroheme. The chain is Siroheme synthase from Escherichia coli O7:K1 (strain IAI39 / ExPEC).